A 376-amino-acid chain; its full sequence is Zinc transporter 7 (376 aa).

At 1-37 (MLPLSIKDDEYKPPKFNLFGKISGWFRSILSDKTSRN) the chain is on the cytoplasmic side. Residues 38 to 58 (LFFFLCLNLSFAFVELLYGIW) form a helical membrane-spanning segment. The Lumenal segment spans residues 59–67 (SNCLGLISD). Residues 68-88 (SFHMFFDSTAILAGLAASVIS) traverse the membrane as a helical segment. At 89–102 (KWRDNDAFSYGYVR) the chain is on the cytoplasmic side. A helical transmembrane segment spans residues 103–123 (AEVLAGFVNGLFLIFTAFFIF). Over 124-140 (SEGVERALAPPDVHHER) the chain is Lumenal. The helical transmembrane segment at 141-161 (LLLVSILGFVVNLIGIFVFKH) threads the bilayer. Residues 161–218 (HGGHGHSHGSGHGHSHSLFNGALDQAHGHVDHCHSHEVKHGAAHSHDHAHGHGHFHSH) form a his-rich loop region. At 162-236 (GGHGHSHGSG…TGPSRQILQG (75 aa)) the chain is on the cytoplasmic side. Residues 194–222 (HSHEVKHGAAHSHDHAHGHGHFHSHDGPS) show a composition bias toward basic and acidic residues. Residues 194–226 (HSHEVKHGAAHSHDHAHGHGHFHSHDGPSLKET) are disordered. A helical membrane pass occupies residues 237-257 (VFLHILADTLGSIGVIASAIM). The Lumenal portion of the chain corresponds to 258 to 262 (MQNFG). Residues 263–283 (LMIADPICSILIAILIVVSVI) traverse the membrane as a helical segment. At 284–376 (PLLRESVGIL…LYVQIDFAAM (93 aa)) the chain is on the cytoplasmic side.

The protein belongs to the cation diffusion facilitator (CDF) transporter (TC 2.A.4) family. SLC30A subfamily. In terms of assembly, homooligomer. In terms of tissue distribution, highly expressed in megakaryocytes and other bone marrow cells and in the epithelium of the small intestine. Expressed in testis (in Leydig cells), adrenal gland (in adrenal medula, zona fasciculata and zona of reticularis), and pituitary gland (in somatotropic cells).

The protein localises to the golgi apparatus membrane. It localises to the cytoplasmic vesicle. Its subcellular location is the golgi apparatus. The protein resides in the trans-Golgi network. It is found in the sarcoplasmic reticulum. The protein localises to the mitochondrion. It catalyses the reaction Zn(2+)(in) = Zn(2+)(out). In terms of biological role, zinc ion transporter mediating zinc entry from the cytosol into the lumen of organelles along the secretory pathway. By contributing to zinc ion homeostasis within the early secretory pathway, regulates the activation and folding of enzymes like alkaline phosphatases. This chain is Zinc transporter 7, found in Homo sapiens (Human).